A 144-amino-acid polypeptide reads, in one-letter code: uncharacterized protein (144 aa).

4 helical membrane-spanning segments follow: residues 16–36, 48–68, 87–107, and 120–140; these read FLIF…GAIF, GFIV…ALII, LLPE…LVLL, and VMSL…WYFG.

It is found in the cell membrane. This is an uncharacterized protein from Methanocaldococcus jannaschii (strain ATCC 43067 / DSM 2661 / JAL-1 / JCM 10045 / NBRC 100440) (Methanococcus jannaschii).